Here is a 690-residue protein sequence, read N- to C-terminus: Elongation factor G (690 aa).

The region spanning 8–283 (SKCRNIGIMA…AVVDYLPSPN (276 aa)) is the tr-type G domain. GTP-binding positions include 17 to 24 (AHIDAGKT), 81 to 85 (DTPGH), and 135 to 138 (NKMD).

It belongs to the TRAFAC class translation factor GTPase superfamily. Classic translation factor GTPase family. EF-G/EF-2 subfamily.

It is found in the cytoplasm. Catalyzes the GTP-dependent ribosomal translocation step during translation elongation. During this step, the ribosome changes from the pre-translocational (PRE) to the post-translocational (POST) state as the newly formed A-site-bound peptidyl-tRNA and P-site-bound deacylated tRNA move to the P and E sites, respectively. Catalyzes the coordinated movement of the two tRNA molecules, the mRNA and conformational changes in the ribosome. This chain is Elongation factor G, found in Anaplasma phagocytophilum (strain HZ).